Consider the following 104-residue polypeptide: Large ribosomal subunit protein uL24 (104 aa).

The protein belongs to the universal ribosomal protein uL24 family. In terms of assembly, part of the 50S ribosomal subunit. A methylated and unmethylated form are thought to exist.

One of two assembly initiator proteins, it binds directly to the 5'-end of the 23S rRNA, where it nucleates assembly of the 50S subunit. Its function is as follows. One of the proteins that surrounds the polypeptide exit tunnel on the outside of the subunit. The protein is Large ribosomal subunit protein uL24 of Rhodopseudomonas palustris (strain ATCC BAA-98 / CGA009).